A 431-amino-acid chain; its full sequence is Trigger factor (431 aa).

The 86-residue stretch at 158–243 (GDLVAVETWS…VAEVSEPVVP (86 aa)) folds into the PPIase FKBP-type domain.

The protein belongs to the FKBP-type PPIase family. Tig subfamily.

It is found in the cytoplasm. It carries out the reaction [protein]-peptidylproline (omega=180) = [protein]-peptidylproline (omega=0). In terms of biological role, involved in protein export. Acts as a chaperone by maintaining the newly synthesized protein in an open conformation. Functions as a peptidyl-prolyl cis-trans isomerase. In Stenotrophomonas maltophilia (strain K279a), this protein is Trigger factor.